The following is a 965-amino-acid chain: Transmembrane channel-like protein 5 (965 aa).

Composition is skewed to polar residues over residues 1–10 and 20–31; these read MSSFHKNSSY and SGSQNHTQNYLR. The tract at residues 1-235 is disordered; the sequence is MSSFHKNSSY…GAEEGDVYSP (235 aa). Residues 1-417 are Extracellular-facing; the sequence is MSSFHKNSSY…YFSFLRWLLK (417 aa). Residues 61 to 70 show a composition bias toward basic and acidic residues; the sequence is TNPDYHHSLA. Polar residues predominate over residues 166 to 181; sequence QGNSYHSGPRSHSNLP. The residue at position 248 (S248) is a Phosphoserine. The helical transmembrane segment at 418-438 threads the bilayer; the sequence is FNIFSFVMNFSFIIIPQFTVG. Residues 439-444 are Cytoplasmic-facing; that stretch reads EKNTLQ. Residues 445–467 traverse the membrane as a helical segment; the sequence is FTGLEFFTGAGYFRETVMYYGFY. Residues 468 to 484 are Extracellular-facing; the sequence is TNSTIRHRMGGASYNMQ. A helical membrane pass occupies residues 485 to 505; sequence LAYIFTIGACLVICFFSLLFS. The Cytoplasmic segment spans residues 506–578; that stretch reads MAKYFRNNFI…NQKLTRFSVH (73 aa). The chain crosses the membrane as a helical span at residues 579–599; the sequence is VAAWLVSTGITAACCVAVYYL. Topologically, residues 600–613 are extracellular; the sequence is AEYNSEFLKTHKNP. The chain crosses the membrane as a helical span at residues 614–634; the sequence is GAVLLLPFVVSCINLAVPRFY. Residues 635–657 lie on the Cytoplasmic side of the membrane; the sequence is SMFRLVERYEIPRQEVYVLLIRN. A helical transmembrane segment spans residues 658 to 678; the sequence is IFLKISIVGILCYYWLNIVAL. At 679–691 the chain is on the extracellular side; it reads SGEECWETLIGQD. Residues 692–712 form a helical membrane-spanning segment; the sequence is IYRLLLMDFVFSLADSLLGEF. Over 713–747 the chain is Cytoplasmic; that stretch reads LRRLIGMKFITSLSLQEFDIARNVLELIYAQTLAW. The chain crosses the membrane as a helical span at residues 748–768; that stretch reads LGIFFCPLLPFIQMITLFIMF. At 769–794 the chain is on the extracellular side; that stretch reads YVKNVSLMMNFQPPSKAWRASQMITF. A helical transmembrane segment spans residues 795-815; that stretch reads FIFLLFFPSFTGVLCTLAITI. The Cytoplasmic segment spans residues 816–859; it reads WRLKPSADCGPFRGLPSFIQSIYSWIDTLSHRPGYLWVVWIYQN. A helical membrane pass occupies residues 860–880; that stretch reads LIGSVHFFFILTLIVLIITYL. Topologically, residues 881–965 are extracellular; that stretch reads YWQITEGRKV…RSMQEENAIA (85 aa).

It belongs to the TMC family.

The protein resides in the membrane. In terms of biological role, probable component of an ion channel. Molecular function hasn't been characterized yet. The polypeptide is Transmembrane channel-like protein 5 (Rattus norvegicus (Rat)).